Reading from the N-terminus, the 89-residue chain is Small ribosomal subunit protein uS17 (89 aa).

This sequence belongs to the universal ribosomal protein uS17 family. As to quaternary structure, part of the 30S ribosomal subunit.

One of the primary rRNA binding proteins, it binds specifically to the 5'-end of 16S ribosomal RNA. The protein is Small ribosomal subunit protein uS17 of Bdellovibrio bacteriovorus (strain ATCC 15356 / DSM 50701 / NCIMB 9529 / HD100).